Here is a 697-residue protein sequence, read N- to C-terminus: Sentrin-specific protease (697 aa).

Positions 1 to 14 are enriched in basic and acidic residues; sequence MSRRSDLSDKDSQS. Disordered stretches follow at residues 1-47 and 365-387; these read MSRR…QGLG and SEES…SDSY. A Nuclear localization signal motif is present at residues 15 to 19; that stretch reads RKRHW. Positions 462-467 match the Nuclear localization signal motif; it reads KVEKKK. The segment at 501–664 is protease; it reads IQICKKDLAT…VFSCQFGEWA (164 aa). Residues histidine 585, aspartate 602, and cysteine 653 contribute to the active site.

This sequence belongs to the peptidase C48 family.

It localises to the nucleus envelope. In terms of biological role, protease that deconjugates smo-1 from targeted proteins and may catalyze the processing of smo-1 to its mature form. The sequence is that of Sentrin-specific protease (ulp-1) from Caenorhabditis elegans.